Consider the following 666-residue polypeptide: MFMYPEFARKALSKLISKKLNIEKVSSKHQLVLLDYGLHGLLPKSLYLEAINSDILNVRFFPPEIINVTDIVKALQNSCRVDEYLKAVSLYHKNSLMVSGPNVVKLMIEYNLLTHSDLEWLINENVVKATYLLKINAYMINFKIDLTVDEIIDLVKDIPVGATLHLYNILNNIDLDIVLRISDEYNIPPVHDILSKLTDEEMCIKLVTKYPMDNVINFINQDVRYSPTFIKTIKDFVNKHLPTMYDGLNDYLHSVIIDEDLIEEYKIKSVAMFNLEYKTDVDTLTLDEQIFVEVNISYYDFRYRQFADEFRDYIMIKERRQITMQSGDRIRRFRRPMSLRSTIIKKDTDSLEDILAHIDNARKNSKVSIEDVERIISSFRLNPCVVRRTMLSDIDIKTKIMVLKIVKDWKSCALTLSAIKGIMVTDTINTVLSKILHHHRNVFKYLTSVENKEIAVCNCSRCLSLFYRELKSVRCDLRTDDGLLDRLYDLTRYALHGKINQNLIGQRCWGPLTEMLFNENKKKKLNNLMEYIKISDMLVYGHSIEKTLIPITDSLSFKLSVDTMSVLNDQYAKIVIFFNTIIEYIIATIYYRLTVLNNYTNVKHFVSKVLHTVMEACGVLFSYIKVNDKIEHELEEMVDKGTVPSYLYHLSINVISIILDDINGTR.

A helical membrane pass occupies residues 574–596 (IVIFFNTIIEYIIATIYYRLTVL).

The protein belongs to the orthopoxvirus OPG074 family.

The protein resides in the membrane. The sequence is that of Protein OPG074 (OPG074) from Homo sapiens (Human).